A 193-amino-acid chain; its full sequence is MKLLEERILKDGHILGDNILKVDSFLTHQVDFSLMREIGRVFAEKFAATGITKVVTIEASGIAPAVFTAEALNVPMIFAKKAKNITMNEGILTAQVYSFTKQVTSTVSIAGKFLSPEDKVLIIDDFLANGQAAKGLIQIIEQAGATVQAIGIVIEKSFQDGRDLLEKAGYPVLSLARLDRFENGQVVFKEADL.

Xanthine is bound by residues Leu20 and Thr27. Residue Ala128–Ala132 coordinates 5-phospho-alpha-D-ribose 1-diphosphate. Lys156 is a xanthine binding site.

This sequence belongs to the purine/pyrimidine phosphoribosyltransferase family. Xpt subfamily. In terms of assembly, homodimer.

The protein localises to the cytoplasm. The enzyme catalyses XMP + diphosphate = xanthine + 5-phospho-alpha-D-ribose 1-diphosphate. It participates in purine metabolism; XMP biosynthesis via salvage pathway; XMP from xanthine: step 1/1. In terms of biological role, converts the preformed base xanthine, a product of nucleic acid breakdown, to xanthosine 5'-monophosphate (XMP), so it can be reused for RNA or DNA synthesis. The protein is Xanthine phosphoribosyltransferase of Streptococcus pneumoniae (strain P1031).